Reading from the N-terminus, the 956-residue chain is DNA replication helicase (956 aa).

120–127 (GTAGAGKT) contacts ATP. The tract at residues 658–694 (PINNHVDADSSQGGQSVPVSQRMEHGQEETHDIPCLS) is disordered. Over residues 667 to 678 (SSQGGQSVPVSQ) the composition is skewed to low complexity. Residues 679–694 (RMEHGQEETHDIPCLS) show a composition bias toward basic and acidic residues.

Belongs to the herpesviridae helicase family. As to quaternary structure, associates with the primase and the primase-associated factor to form the helicase-primase complex.

It localises to the host nucleus. Functionally, component of the helicase/primase complex. Unwinds the DNA at the replication forks and generates single-stranded DNA for both leading and lagging strand synthesis. The primase synthesizes short RNA primers on the lagging strand that the polymerase elongates using dNTPs. Possesses helicase-like motifs and therefore may act as the helicase subunit of the complex. The sequence is that of DNA replication helicase from Human cytomegalovirus (strain AD169) (HHV-5).